Here is a 228-residue protein sequence, read N- to C-terminus: Cytidylate kinase (228 aa).

17–25 (GPTASGKGT) serves as a coordination point for ATP.

Belongs to the cytidylate kinase family. Type 1 subfamily.

It localises to the cytoplasm. It carries out the reaction CMP + ATP = CDP + ADP. It catalyses the reaction dCMP + ATP = dCDP + ADP. This is Cytidylate kinase from Burkholderia pseudomallei (strain 1106a).